Reading from the N-terminus, the 580-residue chain is 2-succinyl-5-enolpyruvyl-6-hydroxy-3-cyclohexene-1-carboxylate synthase (580 aa).

This sequence belongs to the TPP enzyme family. MenD subfamily. As to quaternary structure, homodimer. Mg(2+) serves as cofactor. Requires Mn(2+) as cofactor. Thiamine diphosphate is required as a cofactor.

It carries out the reaction isochorismate + 2-oxoglutarate + H(+) = 5-enolpyruvoyl-6-hydroxy-2-succinyl-cyclohex-3-ene-1-carboxylate + CO2. The protein operates within quinol/quinone metabolism; 1,4-dihydroxy-2-naphthoate biosynthesis; 1,4-dihydroxy-2-naphthoate from chorismate: step 2/7. Its pathway is quinol/quinone metabolism; menaquinone biosynthesis. In terms of biological role, catalyzes the thiamine diphosphate-dependent decarboxylation of 2-oxoglutarate and the subsequent addition of the resulting succinic semialdehyde-thiamine pyrophosphate anion to isochorismate to yield 2-succinyl-5-enolpyruvyl-6-hydroxy-3-cyclohexene-1-carboxylate (SEPHCHC). This is 2-succinyl-5-enolpyruvyl-6-hydroxy-3-cyclohexene-1-carboxylate synthase from Listeria welshimeri serovar 6b (strain ATCC 35897 / DSM 20650 / CCUG 15529 / CIP 8149 / NCTC 11857 / SLCC 5334 / V8).